The following is a 344-amino-acid chain: uncharacterized protein (344 aa).

This is an uncharacterized protein from Caenorhabditis elegans.